The following is a 197-amino-acid chain: Probable GTP-binding protein EngB (197 aa).

Residues 22–195 (KRIEIAFVGR…LKVLESVIDF (174 aa)) enclose the EngB-type G domain. GTP contacts are provided by residues 30–37 (GRSNVGKS), 57–61 (GKTRL), 75–78 (DLPG), 142–145 (TKVD), and 174–176 (FSS). Mg(2+)-binding residues include serine 37 and threonine 59.

Belongs to the TRAFAC class TrmE-Era-EngA-EngB-Septin-like GTPase superfamily. EngB GTPase family. Mg(2+) serves as cofactor.

Its function is as follows. Necessary for normal cell division and for the maintenance of normal septation. This chain is Probable GTP-binding protein EngB, found in Clostridium kluyveri (strain ATCC 8527 / DSM 555 / NBRC 12016 / NCIMB 10680 / K1).